Consider the following 399-residue polypeptide: Lysosomal acid lipase/cholesteryl ester hydrolase (399 aa).

The N-terminal stretch at 1–27 is a signal peptide; it reads MKMRFLGLVVCLVLWTLHSEASGGKLT. Residues 28 to 76 constitute a propeptide, removed in mature form; that stretch reads AVNPETNMNVSEIISYWGFPSEEYLVETEDGYILCLNRIPHGRKNHSDK. N-linked (GlcNAc...) asparagine glycans are attached at residues Asn36, Asn72, Asn101, and Asn161. The 301-residue stretch at 80–380 folds into the AB hydrolase-1 domain; sequence PVVFLQHGLL…EWEHLDFIWG (301 aa). Ser174 acts as the Charge relay system in catalysis. Asn273 and Asn321 each carry an N-linked (GlcNAc...) asparagine glycan. The active-site Charge relay system is His374.

It belongs to the AB hydrolase superfamily. Lipase family. As to quaternary structure, monomer. Glycosylation is not essential for catalytic activity.

The protein localises to the lysosome. The catalysed reaction is a sterol ester + H2O = a sterol + a fatty acid + H(+). The enzyme catalyses cholesteryl (9Z-octadecenoate) + H2O = cholesterol + (9Z)-octadecenoate + H(+). It catalyses the reaction a triacylglycerol + H2O = a 1,2-diacylglycerol + a fatty acid + H(+). It carries out the reaction 1,2-di-(9Z-octadecenoyl)-glycerol + (9Z)-octadecenoate + H(+) = 1,2,3-tri-(9Z-octadecenoyl)-glycerol + H2O. The catalysed reaction is a 1,2-diacylglycerol + H2O = a 1-acylglycerol + a fatty acid + H(+). The enzyme catalyses 1,2-di-(9Z-octadecenoyl)-glycerol + H2O = 1-(9Z-octadecenoyl)-glycerol + (9Z)-octadecenoate + H(+). It catalyses the reaction a 1,3-diacylglycerol + H2O = a 1-acylglycerol + a fatty acid + H(+). It carries out the reaction 1,3-di-(9Z-octadecenoyl)-glycerol + H2O = 1-(9Z-octadecenoyl)-glycerol + (9Z)-octadecenoate + H(+). Functionally, catalyzes the deacylation of cholesteryl ester core lipids of endocytosed low density lipoproteins to generate free fatty acids and cholesterol. Hydrolyzes triglycerides (1,2,3-triacylglycerol) and diglycerides (such as 1,2-diacylglycerol and 1,3-diacylglycerol) with preference for the acyl moieties at the sn-1 or sn-3 positions. The protein is Lysosomal acid lipase/cholesteryl ester hydrolase (LIPA) of Macaca fascicularis (Crab-eating macaque).